Reading from the N-terminus, the 763-residue chain is Putative pentatricopeptide repeat-containing protein At1g74580 (763 aa).

19 PPR repeats span residues 39–69, 75–109, 110–144, 145–179, 180–214, 215–249, 250–284, 285–319, 320–354, 355–389, 390–424, 425–459, 460–494, 495–529, 530–564, 565–595, 601–635, 636–670, and 671–705; these read TLST…MREN, LEGV…DCEP, TVFS…GITP, DVYS…GCEM, NVVA…GVSL, CLST…GVLP, NLFT…GPKP, DVIT…GLEP, DSYT…GFVP, DQFT…GIKP, NVIL…GLIP, EVQT…GYFP, DIFT…GVDP, DVYT…GCAP, NLFT…SVNP, DAVT…MEEA, STPT…CLGP, DGYT…GFIP, and SLTT…GLVP.

Belongs to the PPR family. P subfamily.

The polypeptide is Putative pentatricopeptide repeat-containing protein At1g74580 (Arabidopsis thaliana (Mouse-ear cress)).